The chain runs to 232 residues: Urease accessory protein UreF (232 aa).

It belongs to the UreF family. As to quaternary structure, ureD, UreF and UreG form a complex that acts as a GTP-hydrolysis-dependent molecular chaperone, activating the urease apoprotein by helping to assemble the nickel containing metallocenter of UreC. The UreE protein probably delivers the nickel.

It is found in the cytoplasm. Functionally, required for maturation of urease via the functional incorporation of the urease nickel metallocenter. This Trichodesmium erythraeum (strain IMS101) protein is Urease accessory protein UreF.